The primary structure comprises 349 residues: Flap endonuclease 1-B (349 aa).

The N-domain stretch occupies residues 1-105 (MGIKGLTKLL…GELAKRLARR (105 aa)). A Mg(2+)-binding site is contributed by D34. R71 contributes to the DNA binding site. Residues D87, E159, E161, D180, and D182 each contribute to the Mg(2+) site. The I-domain stretch occupies residues 123 to 254 (DMEKYSKRTV…QTALKLIRQH (132 aa)). Residue E159 participates in DNA binding. DNA is bound by residues G232 and D234. D234 lines the Mg(2+) pocket.

It belongs to the XPG/RAD2 endonuclease family. FEN1 subfamily. Interacts with PCNA. Three molecules of FEN1 bind to one PCNA trimer with each molecule binding to one PCNA monomer. PCNA stimulates the nuclease activity without altering cleavage specificity. It depends on Mg(2+) as a cofactor. Post-translationally, phosphorylated. Phosphorylation upon DNA damage induces relocalization to the nuclear plasma.

It localises to the nucleus. Its subcellular location is the nucleolus. The protein resides in the nucleoplasm. It is found in the mitochondrion. Its function is as follows. Structure-specific nuclease with 5'-flap endonuclease and 5'-3' exonuclease activities involved in DNA replication and repair. During DNA replication, cleaves the 5'-overhanging flap structure that is generated by displacement synthesis when DNA polymerase encounters the 5'-end of a downstream Okazaki fragment. It enters the flap from the 5'-end and then tracks to cleave the flap base, leaving a nick for ligation. Also involved in the long patch base excision repair (LP-BER) pathway, by cleaving within the apurinic/apyrimidinic (AP) site-terminated flap. Acts as a genome stabilization factor that prevents flaps from equilibrating into structures that lead to duplications and deletions. Also possesses 5'-3' exonuclease activity on nicked or gapped double-stranded DNA, and exhibits RNase H activity. Also involved in replication and repair of rDNA and in repairing mitochondrial DNA. This is Flap endonuclease 1-B from Physcomitrium patens (Spreading-leaved earth moss).